A 95-amino-acid polypeptide reads, in one-letter code: UPF0473 protein PEPE_1260 (95 aa).

This sequence belongs to the UPF0473 family.

The sequence is that of UPF0473 protein PEPE_1260 from Pediococcus pentosaceus (strain ATCC 25745 / CCUG 21536 / LMG 10740 / 183-1w).